The following is an 871-amino-acid chain: MSDSSSSSTSAFVSSLVFNFAIFCAFIGLFLCLRPREKHVYQPRCIIDTQPKEEKPEPSPSSPFGLFAYVVKRSETYLIQYAGVDGYFFIRYLFTFGALCILGCLVLFPILLPVNATNGVGEKGFDILSFSNVKNHNRFYAHVFLSWLFFGFTIFIIYRELRYYVIFRHAMQSSGLYNNLPSSSTMLLTELPNSVLNDEETLHELFPNASEFTCVRDLKKLEKKVKKRSDLGNKYESTLNSLINKSVKKHNKLVKKHKPLPSTLDYTAYVKKRPTHRLKFLIGKKVDTIDYCRDTIAELDEVVDKLQTSLEERKKVGSVFIRFRSQTDLQTAYQAFLYSKKFRKYRFGRALVGIAPEDIVWSNLDLSMYTRRGKKTISNTILTLMIIFWAFPVAVVGCISNVNYLIEKVHFLKFIDHMPPKLLGIITGILPSVALSILMSLVPPFIKFLGKFGGALTVQEIENYCQNWYYAFQVVQVFLVTTMTSAATSAVVQVIKEPASSMTLLASNLPKASNFYISYFLLQGLSIPGGALLQIVTLLLSKVLGRIFDNTPRKKWNRWNQLSAPSWGTVYPVYSLLVTIMICYSIIAPIIIGFAAVAFVLIYFAYSYNLIYVLGHNADAKGRNYPRALFQVFVGLYLAEVCLIGLFVLAKNWGATVLEAVFLGFTVACHLYFKYKFLPLMDAVPISAIESVSERPEIKYPMDLGTSEMKNVGRAYPEILEKLSSSSGSDEFLETSSRTSENTKEKIDKDDEGFAITNISSVHKMPSFVLSYFSDLAASNRILTGFDRVLQLLPSFYDIPVRVRNVQYVSPALKATPPSVWIPKDPLGLSTYAIEDARGKVDIFDDNTTFNEKGNLQYTGPPPDYDEAIRS.

11 helical membrane-spanning segments follow: residues alanine 11 to leucine 31, tyrosine 92 to leucine 112, phenylalanine 139 to arginine 159, threonine 380 to serine 400, leucine 422 to valine 442, valine 475 to isoleucine 495, phenylalanine 520 to leucine 540, leucine 562 to isoleucine 582, isoleucine 586 to tyrosine 606, leucine 629 to leucine 649, and tryptophan 653 to phenylalanine 673. Phosphoserine is present on residues serine 725, serine 726, serine 727, serine 729, serine 737, and serine 761. Residues serine 727–serine 740 are compositionally biased toward polar residues. Residues serine 727–lysine 746 are disordered.

This sequence belongs to the CSC1 (TC 1.A.17) family.

It localises to the golgi apparatus membrane. Acts as an osmosensitive calcium-permeable cation channel. This is an uncharacterized protein from Schizosaccharomyces pombe (strain 972 / ATCC 24843) (Fission yeast).